A 301-amino-acid polypeptide reads, in one-letter code: Glycine--tRNA ligase alpha subunit (301 aa).

It belongs to the class-II aminoacyl-tRNA synthetase family. In terms of assembly, tetramer of two alpha and two beta subunits.

Its subcellular location is the cytoplasm. It catalyses the reaction tRNA(Gly) + glycine + ATP = glycyl-tRNA(Gly) + AMP + diphosphate. In Shewanella amazonensis (strain ATCC BAA-1098 / SB2B), this protein is Glycine--tRNA ligase alpha subunit.